A 141-amino-acid polypeptide reads, in one-letter code: ATP synthase epsilon chain (141 aa).

It belongs to the ATPase epsilon chain family. In terms of assembly, F-type ATPases have 2 components, CF(1) - the catalytic core - and CF(0) - the membrane proton channel. CF(1) has five subunits: alpha(3), beta(3), gamma(1), delta(1), epsilon(1). CF(0) has three main subunits: a, b and c.

The protein localises to the cell inner membrane. In terms of biological role, produces ATP from ADP in the presence of a proton gradient across the membrane. In Paraburkholderia phytofirmans (strain DSM 17436 / LMG 22146 / PsJN) (Burkholderia phytofirmans), this protein is ATP synthase epsilon chain.